A 386-amino-acid polypeptide reads, in one-letter code: Transcription factor GTE1 (386 aa).

Disordered regions lie at residues 66 to 106 (GAAQ…KHVS) and 340 to 386 (ANKS…AKKA). The span at 68–78 (AQTNTSKSNSG) shows a compositional bias: polar residues. Residues 105–211 (VSSPDLMRQF…EKFEEKWLLI (107 aa)) form the Bromo domain. An NET domain is found at 263–344 (RESVVQRCRK…EALKAANKSS (82 aa)). A compositionally biased stretch (low complexity) spans 345–358 (GGTNAQNNNNTGTG).

Barely detectable in stems, leaves, siliques, and dry seeds, but was present at considerable levels in roots, flowers and imbibited seeds.

It is found in the nucleus. Functionally, transcription activator that plays a role in the promotion of seed germination by both negatively and positively regulating the abscisic acid (ABA) and phytochrome A (phyA) transduction pathways, respectively. In Arabidopsis thaliana (Mouse-ear cress), this protein is Transcription factor GTE1 (GTE1).